We begin with the raw amino-acid sequence, 103 residues long: Small ribosomal subunit protein uS10 (103 aa).

It belongs to the universal ribosomal protein uS10 family. In terms of assembly, part of the 30S ribosomal subunit.

Involved in the binding of tRNA to the ribosomes. This Campylobacter jejuni subsp. jejuni serotype O:6 (strain 81116 / NCTC 11828) protein is Small ribosomal subunit protein uS10.